Consider the following 362-residue polypeptide: Very-long-chain (3R)-3-hydroxyacyl-CoA dehydratase 3 (362 aa).

Position 1 is an N-acetylmethionine (M1). Residues M1–Y149 are Cytoplasmic-facing. A CS domain is found at V5–T94. T7 is modified (phosphothreonine). A coiled-coil region spans residues L111–S138. Position 114 is a phosphoserine (S114). A helical transmembrane segment spans residues L150–V170. Residues R171 to D189 are Lumenal-facing. Residues M190–T210 traverse the membrane as a helical segment. Topologically, residues S211–T212 are cytoplasmic. A helical membrane pass occupies residues P213 to G233. At T234–A242 the chain is on the lumenal side. Residues V243–M263 traverse the membrane as a helical segment. The Cytoplasmic portion of the chain corresponds to L264 to T280. A helical transmembrane segment spans residues M281 to I301. Catalysis depends on residues Y286 and E293. The Lumenal segment spans residues P302–V322. A helical membrane pass occupies residues R323 to F343. The Cytoplasmic segment spans residues R344–H362.

Belongs to the very long-chain fatty acids dehydratase HACD family. In terms of assembly, may interact with enzymes of the ELO family (including ELOVL1); with those enzymes that mediate condensation, the first of the four steps of the reaction cycle responsible for fatty acids elongation, may be part of a larger fatty acids elongase complex. Interacts with RAC1. Associates with internalized insulin receptor/INSR complexes on Golgi/endosomal membranes; HACD3/PTPLAD1 together with ATIC and PRKAA2/AMPK2 is proposed to be part of a signaling network regulating INSR autophosphorylation and endocytosis.

Its subcellular location is the endoplasmic reticulum membrane. It carries out the reaction a very-long-chain (3R)-3-hydroxyacyl-CoA = a very-long-chain (2E)-enoyl-CoA + H2O. The enzyme catalyses (3R)-hydroxyhexadecanoyl-CoA = (2E)-hexadecenoyl-CoA + H2O. It participates in lipid metabolism; fatty acid biosynthesis. Its function is as follows. Catalyzes the third of the four reactions of the long-chain fatty acids elongation cycle. This endoplasmic reticulum-bound enzymatic process, allows the addition of two carbons to the chain of long- and very long-chain fatty acids/VLCFAs per cycle. This enzyme catalyzes the dehydration of the 3-hydroxyacyl-CoA intermediate into trans-2,3-enoyl-CoA, within each cycle of fatty acid elongation. Thereby, it participates in the production of VLCFAs of different chain lengths that are involved in multiple biological processes as precursors of membrane lipids and lipid mediators. Involved in Rac1-signaling pathways leading to the modulation of gene expression. Promotes insulin receptor/INSR autophosphorylation and is involved in INSR internalization. The protein is Very-long-chain (3R)-3-hydroxyacyl-CoA dehydratase 3 of Mus musculus (Mouse).